The chain runs to 573 residues: Solute carrier family 41 member 2 (573 aa).

Residues 1–162 are Extracellular-facing; sequence MTNSKGRSIT…KESSGIMALQ (162 aa). Phosphoserine occurs at positions 136 and 137. A helical membrane pass occupies residues 163-183; the sequence is ILVPFLLAGFGTVSAGMVLDI. At 184-195 the chain is on the cytoplasmic side; the sequence is VQHWEVFRKVTE. Residues 196–216 traverse the membrane as a helical segment; it reads VFILVPALLGLKGNLEMTLAS. The Extracellular portion of the chain corresponds to 217–245; that stretch reads RLSTAVNIGKMDSPIEKWNLIIGNLALKQ. A helical membrane pass occupies residues 246–266; the sequence is VQATVVGFLAAVAAIILGWIP. The Cytoplasmic segment spans residues 267 to 282; it reads EGKYYLDHSILLCSSS. The chain crosses the membrane as a helical span at residues 283–303; sequence VATAFIASLLQGIIMVGVIVG. Topologically, residues 304 to 313 are extracellular; the sequence is SKKTGINPDN. Residues 314 to 334 form a helical membrane-spanning segment; sequence VATPIAASFGDLITLAILAWI. Residues 335–347 lie on the Cytoplasmic side of the membrane; the sequence is SQGLYSCLETYYY. Residues 348–368 form a helical membrane-spanning segment; that stretch reads ISPLVGVFFLALTPIWIIIAA. Residues 369-376 are Extracellular-facing; that stretch reads KHPATRTV. The helical transmembrane segment at 377-397 threads the bilayer; that stretch reads LHSGWEPVITAMVISSIGGLI. Over 398 to 406 the chain is Cytoplasmic; the sequence is LDTTVSDPN. A helical membrane pass occupies residues 407 to 427; the sequence is LVGIVVYTPVINGIGGNLVAI. Residues 428–469 lie on the Extracellular side of the membrane; it reads QASRISTYLHLHSIPGELPDEPKGCYYPFRTFFGPGVNNKSA. A helical membrane pass occupies residues 470-490; it reads QVLLLLVIPGHLIFLYTIHLM. At 491 to 498 the chain is on the cytoplasmic side; it reads KSGHTSLT. The chain crosses the membrane as a helical span at residues 499–519; that stretch reads IIFIVVYLFGAVLQVFTLLWI. The Extracellular portion of the chain corresponds to 520–543; sequence ADWMVHHFWRKGKDPDSFSIPYLT. Residues 544–564 form a helical membrane-spanning segment; sequence ALGDLLGTALLALSFHFLWLI. At 565–573 the chain is on the cytoplasmic side; it reads GDRDGDVGD.

It belongs to the SLC41A transporter family.

It localises to the cell membrane. The enzyme catalyses Mg(2+)(in) = Mg(2+)(out). The catalysed reaction is Mn(2+)(in) = Mn(2+)(out). It carries out the reaction Co(2+)(in) = Co(2+)(out). It catalyses the reaction Ni(2+)(in) = Ni(2+)(out). The enzyme catalyses Fe(2+)(in) = Fe(2+)(out). Functionally, acts as a plasma-membrane magnesium transporter. Can also mediate the transport of other divalent metal cations in an order of Ba(2+) &gt; Ni(2+) &gt; Co(2+) &gt; Fe(2+) &gt; Mn(2+). The sequence is that of Solute carrier family 41 member 2 (SLC41A2) from Homo sapiens (Human).